The following is a 219-amino-acid chain: OVARIAN TUMOR DOMAIN-containing deubiquitinating enzyme 12 (219 aa).

An OTU domain is found at 79–203; that stretch reads LCELKVSGDG…EVHYNSLYDI (125 aa). Asp87 is an active-site residue. Cys90 functions as the Nucleophile in the catalytic mechanism. His196 is an active-site residue.

Belongs to the peptidase C85 family.

The catalysed reaction is Thiol-dependent hydrolysis of ester, thioester, amide, peptide and isopeptide bonds formed by the C-terminal Gly of ubiquitin (a 76-residue protein attached to proteins as an intracellular targeting signal).. Its function is as follows. Hydrolase that can remove conjugated ubiquitin from proteins in vitro and may therefore play an important regulatory role at the level of protein turnover by preventing degradation. Inactive cysteine protease. This Arabidopsis thaliana (Mouse-ear cress) protein is OVARIAN TUMOR DOMAIN-containing deubiquitinating enzyme 12.